The sequence spans 822 residues: Fibroblast growth factor receptor 1 (822 aa).

The signal sequence occupies residues 1–21; that stretch reads MWGWKCLLFWAVLVTATLCTA. Topologically, residues 22 to 376 are extracellular; sequence RPAPTLPEQA…AVMTSPLYLE (355 aa). An Ig-like C2-type 1 domain is found at 25–119; that stretch reads PTLPEQAQPW…DTTYFSVNVS (95 aa). Residues cysteine 55 and cysteine 101 are joined by a disulfide bond. Asparagine 77 and asparagine 117 each carry an N-linked (GlcNAc...) asparagine glycan. The interval 120–162 is disordered; that stretch reads DALPSSEDDDDDDDSSSEEKETDNTKPNRRPVAPYWTSPEKME. The span at 125-135 shows a compositional bias: acidic residues; the sequence is SEDDDDDDDSS. Residues 136–145 show a composition bias toward basic and acidic residues; that stretch reads SEEKETDNTK. Ig-like C2-type domains follow at residues 158–246 and 255–357; these read PEKM…YQLD and PILQ…AWLT. The tract at residues 160–177 is heparin-binding; that stretch reads KMEKKLHAVPAAKTVKFK. Cysteine 178 and cysteine 230 are oxidised to a cystine. N-linked (GlcNAc...) asparagine glycosylation is found at asparagine 227, asparagine 240, asparagine 264, asparagine 296, asparagine 317, and asparagine 330. Cysteine 277 and cysteine 341 are disulfide-bonded. The helical transmembrane segment at 377–397 threads the bilayer; it reads IIIYCTGAFLISCMLGSVIIY. Topologically, residues 398–822 are cytoplasmic; the sequence is KMKSGTKKSD…QLANSGLKRR (425 aa). Phosphotyrosine; by autocatalysis is present on tyrosine 463. Residues 478-767 form the Protein kinase domain; it reads LVLGKPLGEG…VALTSNQEYL (290 aa). ATP contacts are provided by residues 484 to 490, lysine 514, 562 to 564, and asparagine 568; these read LGEGCFG and EYA. A phosphotyrosine; by autocatalysis mark is found at tyrosine 583 and tyrosine 585. Residue aspartate 623 is the Proton acceptor of the active site. Residues arginine 627 and aspartate 641 each coordinate ATP. 4 positions are modified to phosphotyrosine; by autocatalysis: tyrosine 653, tyrosine 654, tyrosine 730, and tyrosine 766. Polar residues predominate over residues 782–792; that stretch reads DTRSSTCSSGE. The segment at 782 to 822 is disordered; the sequence is DTRSSTCSSGEDSVFSHEPLPEEPCLPRHPTQLANSGLKRR.

It belongs to the protein kinase superfamily. Tyr protein kinase family. Fibroblast growth factor receptor subfamily. In terms of assembly, monomer. Homodimer after ligand binding. Interacts predominantly with FGF1 and FGF2, but can also interact with FGF3, FGF4, FGF5, FGF6, FGF8, FGF10, FGF19, FGF21, FGF22 and FGF23 (in vitro). Ligand specificity is determined by tissue-specific expression of isoforms, and differences in the third Ig-like domain are crucial for ligand specificity. Affinity for fibroblast growth factors (FGFs) is increased by heparan sulfate glycosaminoglycans that function as coreceptors. Likewise, KLB increases the affinity for FGF19, FGF21 and FGF23. Interacts (phosphorylated on Tyr-766) with PLCG1 (via SH2 domains). Interacts with FRS2. Interacts with RPS6KA1. Interacts (via C-terminus) with NEDD4 (via WW3 domain). Interacts with KL. Interacts with SHB (via SH2 domain). Interacts with GRB10. Interacts with ANOS1; this interaction does not interfere with FGF2-binding to FGFR1, but prevents binding of heparin-bound FGF2. Interacts with SOX2 and SOX3. Interacts with FLRT1, FLRT2 and FLRT3. Found in a ternary complex with FGF1 and ITGAV:ITGB3. Autophosphorylated. Binding of FGF family members together with heparan sulfate proteoglycan or heparin promotes receptor dimerization and autophosphorylation on tyrosine residues. Autophosphorylation occurs in trans between the two FGFR molecules present in the dimer and proceeds in a highly ordered manner. Initial autophosphorylation at Tyr-653 increases the kinase activity by a factor of 50 to 100. After this, Tyr-583 becomes phosphorylated, followed by phosphorylation of Tyr-463, Tyr-766, Tyr-583 and Tyr-585. In a third stage, Tyr-654 is autophosphorylated, resulting in a further tenfold increase of kinase activity. Phosphotyrosine residues provide docking sites for interacting proteins and so are crucial for FGFR1 function and its regulation. In terms of processing, ubiquitinated. FGFR1 is rapidly ubiquitinated by NEDD4 after autophosphorylation, leading to internalization and lysosomal degradation. CBL is recruited to activated FGFR1 via FRS2 and GRB2, and mediates ubiquitination and subsequent degradation of FGFR1. Post-translationally, N-glycosylated in the endoplasmic reticulum. The N-glycan chains undergo further maturation to an Endo H-resistant form in the Golgi apparatus. As to expression, widely expressed.

Its subcellular location is the cell membrane. It is found in the nucleus. The protein resides in the cytoplasm. It localises to the cytosol. The protein localises to the cytoplasmic vesicle. It carries out the reaction L-tyrosyl-[protein] + ATP = O-phospho-L-tyrosyl-[protein] + ADP + H(+). Its activity is regulated as follows. Present in an inactive conformation in the absence of bound ligand. Ligand binding leads to dimerization and activation by sequential autophosphorylation on tyrosine residues. Tyrosine-protein kinase that acts as a cell-surface receptor for fibroblast growth factors and plays an essential role in the regulation of embryonic development, cell proliferation, differentiation and migration. Required for normal mesoderm patterning and correct axial organization during embryonic development, normal skeletogenesis and normal development of the gonadotropin-releasing hormone (GnRH) neuronal system. Phosphorylates PLCG1, FRS2, GAB1 and SHB. Ligand binding leads to the activation of several signaling cascades. Activation of PLCG1 leads to the production of the cellular signaling molecules diacylglycerol and inositol 1,4,5-trisphosphate. Phosphorylation of FRS2 triggers recruitment of GRB2, GAB1, PIK3R1 and SOS1, and mediates activation of RAS, MAPK1/ERK2, MAPK3/ERK1 and the MAP kinase signaling pathway, as well as of the AKT1 signaling pathway. Promotes phosphorylation of SHC1, STAT1 and PTPN11/SHP2. In the nucleus, enhances RPS6KA1 and CREB1 activity and contributes to the regulation of transcription. FGFR1 signaling is down-regulated by IL17RD/SEF, and by FGFR1 ubiquitination, internalization and degradation. The sequence is that of Fibroblast growth factor receptor 1 (Fgfr1) from Mus musculus (Mouse).